A 293-amino-acid polypeptide reads, in one-letter code: Cytidine deaminase (293 aa).

2 CMP/dCMP-type deaminase domains span residues 47-166 (DDRA…FGPA) and 186-293 (VSDD…YQAV). Position 88 to 90 (88 to 90 (NME)) interacts with substrate. His-101 lines the Zn(2+) pocket. Catalysis depends on Glu-103, which acts as the Proton donor. Residues Cys-128 and Cys-131 each coordinate Zn(2+).

This sequence belongs to the cytidine and deoxycytidylate deaminase family. Homodimer. Zn(2+) is required as a cofactor.

The catalysed reaction is cytidine + H2O + H(+) = uridine + NH4(+). It catalyses the reaction 2'-deoxycytidine + H2O + H(+) = 2'-deoxyuridine + NH4(+). This enzyme scavenges exogenous and endogenous cytidine and 2'-deoxycytidine for UMP synthesis. The protein is Cytidine deaminase of Aeromonas hydrophila subsp. hydrophila (strain ATCC 7966 / DSM 30187 / BCRC 13018 / CCUG 14551 / JCM 1027 / KCTC 2358 / NCIMB 9240 / NCTC 8049).